The primary structure comprises 283 residues: Non-selective voltage-gated ion channel VDAC3 (283 aa).

At C2 the chain carries N-acetylcysteine. Residue T4 is modified to Phosphothreonine. N6-acetyllysine is present on residues K12, K15, and K20. The next 2 membrane-spanning stretches (beta stranded) occupy residues 26–35 (MVKIDLKTKS) and 39–47 (VEFSTSGHA). Glycyl lysine isopeptide (Lys-Gly) (interchain with G-Cter in ubiquitin) cross-links involve residues K53 and K61. Transmembrane regions (beta stranded) follow at residues 54-64 (ASGNLETKYKV), 69-76 (LTFTQKWN), and 80-89 (TLGTEISWEN). An N6-acetyllysine modification is found at K90. Residues 95–104 (LKLTLDTIFV) traverse the membrane as a beta stranded segment. Residues K109 and K110 each participate in a glycyl lysine isopeptide (Lys-Gly) (interchain with G-Cter in ubiquitin) cross-link. The next 10 beta stranded transmembrane spans lie at 111–120 (SGKLKASYKR), 123–130 (FSVGSNVD), 137–145 (TIYGWAVLA), 150–158 (LAGYQMSFD), 163–175 (KLSQNNFALGYKA), 178–185 (FQLHTHVN), 189–198 (EFGGSIYQKV), 202–211 (IETSINLAWT), 218–227 (RFGIAAKYML), and 231–238 (TSLSAKVN). A Glycyl lysine isopeptide (Lys-Gly) (interchain with G-Cter in ubiquitin) cross-link involves residue K163. A Phosphoserine modification is found at S241. NAD(+)-binding positions include 242-244 (LIG) and 260-264 (SALID). Beta stranded transmembrane passes span 242-251 (LIGLGYTQTL) and 254-263 (GVKLTLSALI). K266 is modified (N6-acetyllysine; alternate). K266 participates in a covalent cross-link: Glycyl lysine isopeptide (Lys-Gly) (interchain with G-Cter in ubiquitin); alternate. Residues 273 to 282 (HKVGLGFELE) traverse the membrane as a beta stranded segment. K274 is covalently cross-linked (Glycyl lysine isopeptide (Lys-Gly) (interchain with G-Cter in ubiquitin)).

This sequence belongs to the eukaryotic mitochondrial porin family. Interacts with ARMC12 in a TBC1D21-dependent manner. Interacts with MISFA. Post-translationally, ubiquitinated by PRKN during mitophagy, leading to its degradation and enhancement of mitophagy. Deubiquitinated by USP30. In terms of tissue distribution, expressed in erythrocytes (at protein level). Widely expressed. Highest in testis.

The protein resides in the mitochondrion outer membrane. The protein localises to the membrane. It carries out the reaction chloride(in) = chloride(out). The enzyme catalyses K(+)(in) = K(+)(out). Functionally, non-selective voltage-gated ion channel that mediates the transport of anions and cations through the mitochondrion outer membrane and plasma membrane. Forms a high-conducting channel with a stable open state and a voltage-induced closure with a mild preference for anions over cations. Involved in male fertility and sperm mitochondrial sheath formation. The chain is Non-selective voltage-gated ion channel VDAC3 from Homo sapiens (Human).